A 239-amino-acid polypeptide reads, in one-letter code: MKKTELLYEGKAKKIWKTDDENILIAEFKDSLTAFDAQKKSEEAGKGALNCKISANLFKLLEEQGIKTHFVECISENEMVIKKAEMIMIEVVVRNIATGSLTKRLGIPDGTKLPFALVEFYYKNDALHDPLINDEHALILELVDHESELEELKRLGREINVVLKSFFDKANLNLVDFKVEFGKDSEGNIILADEISPDSCRFWDKTSGEKLDKDLFRHDLGNVKVAYEEVLKRITKVMQ.

Belongs to the SAICAR synthetase family.

It catalyses the reaction 5-amino-1-(5-phospho-D-ribosyl)imidazole-4-carboxylate + L-aspartate + ATP = (2S)-2-[5-amino-1-(5-phospho-beta-D-ribosyl)imidazole-4-carboxamido]succinate + ADP + phosphate + 2 H(+). It participates in purine metabolism; IMP biosynthesis via de novo pathway; 5-amino-1-(5-phospho-D-ribosyl)imidazole-4-carboxamide from 5-amino-1-(5-phospho-D-ribosyl)imidazole-4-carboxylate: step 1/2. In Nitratiruptor sp. (strain SB155-2), this protein is Phosphoribosylaminoimidazole-succinocarboxamide synthase.